We begin with the raw amino-acid sequence, 5073 residues long: Malformin synthetase mlfA (5073 aa).

The interval 194–585 is adenylation 1; it reads ERHATNRPHS…CGRADTQVKL (392 aa). In terms of domain architecture, Carrier 1 spans 726–799; the sequence is SRLEQEVQLA…EAASLAEVQE (74 aa). O-(pantetheine 4'-phosphoryl)serine is present on Ser-760. The interval 837-1268 is condensation 1; it reads EDVFPCTTMQ…ALNTLSLLQA (432 aa). Positions 1296-1685 are adenylation 2; the sequence is DRWVTRHPEG…GRKDTQVKLR (390 aa). The Carrier 2 domain maps to 1823 to 1900; it reads TPASELERTL…QLAAEVGEPA (78 aa). Ser-1860 is modified (O-(pantetheine 4'-phosphoryl)serine). Disordered stretches follow at residues 1901 to 1930 and 1963 to 1984; these read GQSA…DGVD and GGSS…SSSK. 2 stretches are compositionally biased toward low complexity: residues 1903–1927 and 1965–1982; these read SASS…STND and SSSN…SSSS. Positions 2031-2446 are condensation 2; it reads EDIYPATALQ…AVSCSDTETL (416 aa). Positions 2469-2861 are adenylation 3; sequence SRTPHAPAVC…IGRRDGQLKL (393 aa). A Carrier 3 domain is found at 2997–3073; it reads RPKTSQEQEM…QLICHLNSIR (77 aa). Ser-3034 bears the O-(pantetheine 4'-phosphoryl)serine mark. 2 condensation regions span residues 3090-3555 and 3576-3995; these read WVAL…TYDQ and DIYP…EQLV. Residues 4020–4410 are adenylation 4; that stretch reads HASRQAVCAW…VGRKDNQIKF (391 aa). Residues 4544-4620 form the Carrier 4 domain; that stretch reads MPSTAAERKM…DLGDQARSPN (77 aa). Ser-4581 carries the post-translational modification O-(pantetheine 4'-phosphoryl)serine. The disordered stretch occupies residues 4611–4633; that stretch reads DLGDQARSPNADNQRVSTASSAG. A compositionally biased stretch (polar residues) spans 4617 to 4631; the sequence is RSPNADNQRVSTASS. The segment at 4657-4991 is condensation 5; sequence DVLPTTSFQR…LQTIVQHQNN (335 aa).

It belongs to the NRP synthetase family.

It participates in secondary metabolite biosynthesis. Functionally, nonribosomal peptide synthetase; part of the gene cluster that mediates the biosynthesis of malformins, cyclic pentapeptides with a disulfide bond between 2 consecutive cysteins, that show potential anti-tumor as well as antimalarial and antitrypanosomal properties. The nonribosomal peptide synthetase mlfA is responsible of the formation of the cyclic pentapeptide. The malformin biosynthesis clusters in malformin-producing fungi also contain enzymes involved in the formation of the disulfide bond between the two consecutive cysteins within malformins, in addition to additional tailoring enzymes such as methyltransferases or oxidoreductases. They are also composed of up to 4 major facilitator superfamily transporters, and transcription factors probably involved in the regulation of the expression of those clusters. In Aspergillus tubingensis (strain CBS 134.48), this protein is Malformin synthetase mlfA.